Consider the following 235-residue polypeptide: Uracil-DNA glycosylase (235 aa).

Catalysis depends on aspartate 71, which acts as the Proton acceptor.

Belongs to the uracil-DNA glycosylase (UDG) superfamily. UNG family.

It localises to the cytoplasm. It catalyses the reaction Hydrolyzes single-stranded DNA or mismatched double-stranded DNA and polynucleotides, releasing free uracil.. Excises uracil residues from the DNA which can arise as a result of misincorporation of dUMP residues by DNA polymerase or due to deamination of cytosine. This is Uracil-DNA glycosylase from Helicobacter hepaticus (strain ATCC 51449 / 3B1).